The following is a 161-amino-acid chain: Vasotocin-neurophysin VT (161 aa).

The first 22 residues, 1 to 22 (MSAMGWTLLAAALLAISAQSNG), serve as a signal peptide directing secretion. A disulfide bridge links Cys23 with Cys28. Gly31 carries the post-translational modification Glycine amide. 7 disulfides stabilise this stretch: Cys43-Cys91, Cys46-Cys58, Cys52-Cys81, Cys59-Cys71, Cys99-Cys111, Cys105-Cys123, and Cys112-Cys117.

The protein belongs to the vasopressin/oxytocin family.

Its subcellular location is the secreted. Functionally, vasotocin is an antidiuretic hormone. The sequence is that of Vasotocin-neurophysin VT from Eptatretus stoutii (Pacific hagfish).